Consider the following 357-residue polypeptide: MKNDYRTFKLSLLTLAPIHIGNGEKYTSREFIYENKKFYFPDMGKFYNKMVEKRLAEKFEAFLIQTRPNARNNRLISFLNDNRIAERSFGGYSISETGLESDRNPNSAGAINEVNKFIRDAFGNPYIPGSSLKGAIRTILMNTTPKWNNENAVNDFGRFPKENKNLIPWGPKKGKEYDDLFNAIRVSDSKPFDNKRLILVQKWDYSAKTNKAKPLPLYRESISPLTKIEFEITTTTDEAGRLIEELGKRAQAFYKDYKAFFLSEFPDDKIQANLQYPIYLGAGSGAWTKTLFKQADGILQRRYSRMKTKMVKKGVLKLTKAPLKIVKIPSGNHSLIKNHESFYEMGKANFMIKEIDK.

The protein belongs to the CRISPR-associated Csm5 family. In terms of assembly, part of the Csm effector complex that includes at least Cas10(1), Csm2(3), Csm3(5), Csm4(1), Csm5(1) and mature crRNA. The Csm complex is elongated and slightly twisted with a maximal length of 215 Angstroms and a diameter of 75-80 Angstroms. It has been modeled to have a central protein filamant of Csm3 subunits along which the dsRNA helix of paired crRNA and target RNA binds. The filament is capped at one end by Cas10 and Csm4 and at the other end by Csm5; ssDNA is thought to bind to the N-terminal HD domain of Cas10. Csm with a precursor crRNA does not include Csm5, while Cas6, the enzyme probably involved in pre-crRNA processing, is found associated with a subset of the Csm complex.

In terms of biological role, CRISPR (clustered regularly interspaced short palindromic repeat) is an adaptive immune system that provides protection against mobile genetic elements (viruses, transposable elements and conjugative plasmids). CRISPR clusters contain spacers, sequences complementary to antecedent mobile elements, and target invading nucleic acids. CRISPR clusters are transcribed and processed into CRISPR RNA (crRNA). The type III-A Csm effector complex binds crRNA and acts as a crRNA-guided RNase, DNase and cyclic oligoadenylate synthase; binding of target RNA cognate to the crRNA is required for all activities. In a heterologous host this Csm effector complex restricts ssRNA phage MS2, suggesting it may target RNA viruses in vivo. Its function is as follows. Csm functions as a non-specific ssDNase. Base-pairing between crRNA and target RNA to form a ternary Csm complex activates a ssDNase activity; target RNA cleavage suppresses the ssDNase, a temporal control that prevents uncontrolled DNA degradation. Viral RNA transcripts probably tether the Csm complex to the viral genome, recruiting Cas10 ssDNA activity which is able to degrade DNA in the transcription bubble, spatially controlling the DNase activity. Functionally, this subunit might be involved in maturation of a crRNA intermediate to its mature form. In Streptococcus thermophilus, this protein is CRISPR system Cms protein Csm5.